The chain runs to 594 residues: Parathyroid hormone/parathyroid hormone-related peptide receptor (594 aa).

Residues 1–28 (MGTARIAPGLALLLCCPVLSSAYALVDA) form the signal peptide. The Extracellular portion of the chain corresponds to 29–188 (DDVMTKEEQI…TREREVFDRL (160 aa)). 3 disulfide bridges follow: C48-C117, C108-C149, and C132-C171. Residues 66 to 102 (DKGWTSASTSGKPRKDKASGKLYPESEEDKEAPTDSR) form a disordered region. N-linked (GlcNAc...) asparagine glycosylation is found at N152, N162, N167, and N177. The chain crosses the membrane as a helical span at residues 189-209 (GMIYTVGYSMSLASLTVAVLI). Over 210-223 (LAYFRRLHCTRNYI) the chain is Cytoplasmic. The helical transmembrane segment at 224-244 (HMHLFLSFMLRAVSIFVKDAV) threads the bilayer. The Extracellular portion of the chain corresponds to 245–295 (LYSGATLDEAERLTEEELRAIAQAPPPPATAAAGYAGCRVAVTFFLYFLAT). A helical membrane pass occupies residues 296–316 (NYYWILVEGLYLHSLIFMAFF). The Cytoplasmic portion of the chain corresponds to 317 to 319 (SEK). Residues 320 to 340 (KYLWGFTVFGWGLPAVFVAVW) traverse the membrane as a helical segment. Over 341–361 (VSVRATLANTGCWDLSSGNKK) the chain is Extracellular. A helical transmembrane segment spans residues 362–382 (WIIQVPILASIVLHFILFINI). Residues 383-405 (VRVLATKLRETNAGRCDTRQQYR) lie on the Cytoplasmic side of the membrane. The chain crosses the membrane as a helical span at residues 406-426 (KLLKSTLVLMPLFGVHYIVFM). Residues 427 to 440 (ATPYTEVSGTLWQV) are Extracellular-facing. Residues 441 to 461 (QMHYEMLFNSFQGFFVAIIYC) traverse the membrane as a helical segment. Over 462-594 (FCNGEVQAEI…LLQEEWETVM (133 aa)) the chain is Cytoplasmic. An Important for interaction with G proteins motif is present at residues 475 to 478 (WSRW). The disordered stretch occupies residues 525-594 (PTATTNGHPQ…LLQEEWETVM (70 aa)). Residues 543-558 (TPALETLETTPPATAA) show a composition bias toward low complexity. Residue T552 is modified to Phosphothreonine.

The protein belongs to the G-protein coupled receptor 2 family. Homodimer in the absence of bound ligand. Peptide hormone binding leads to dissociation of the homodimer. Post-translationally, N-glycosylated.

Its subcellular location is the cell membrane. G-protein-coupled receptor for parathyroid hormone (PTH) and for parathyroid hormone-related peptide (PTHLH). Ligand binding causes a conformation change that triggers signaling via guanine nucleotide-binding proteins (G proteins) and modulates the activity of downstream effectors, such as adenylate cyclase (cAMP). PTH1R is coupled to G(s) G alpha proteins and mediates activation of adenylate cyclase activity. PTHLH dissociates from PTH1R more rapidly than PTH; as consequence, the cAMP response induced by PTHLH decays faster than the response induced by PTH. The protein is Parathyroid hormone/parathyroid hormone-related peptide receptor (PTH1R) of Pongo abelii (Sumatran orangutan).